A 372-amino-acid polypeptide reads, in one-letter code: Cytochrome b (372 aa).

Transmembrane regions (helical) follow at residues 25–45, 69–90, 105–125, and 170–190; these read FGSMLLTCLMMQIMTGFFLAI, WIMQNIHAIGASVFFICIYIHI, WFSGTALLITLMATAFFGYVL, and FFALHFILPFTIASLSSIHII. 2 residues coordinate heme b: His-75 and His-89. His-174 and His-188 together coordinate heme b. His-193 contributes to the a ubiquinone binding site. 4 helical membrane passes run 218–238, 280–300, 312–332, and 339–358; these read YKDMLMTTSMFMLMFMILSFM, LGGTLALLMSVTILITAPFTH, LAQTLFWTLIATFITITWTAT, and FILISQMASVFYFSFFIMNP.

This sequence belongs to the cytochrome b family. As to quaternary structure, the cytochrome bc1 complex contains 3 respiratory subunits (MT-CYB, CYC1 and UQCRFS1), 2 core proteins (UQCRC1 and UQCRC2) and probably 6 low-molecular weight proteins. Heme b is required as a cofactor.

The protein localises to the mitochondrion inner membrane. Functionally, component of the ubiquinol-cytochrome c reductase complex (complex III or cytochrome b-c1 complex) that is part of the mitochondrial respiratory chain. The b-c1 complex mediates electron transfer from ubiquinol to cytochrome c. Contributes to the generation of a proton gradient across the mitochondrial membrane that is then used for ATP synthesis. The protein is Cytochrome b (MT-CYB) of Sinomicrurus japonicus (Coral snake).